Reading from the N-terminus, the 953-residue chain is Pyruvate, phosphate dikinase, chloroplastic (953 aa).

The transit peptide at 1–77 directs the protein to the chloroplast; it reads MMSSLSVEGM…VLNPVSPPVT (77 aa). The segment at 55–74 is disordered; that stretch reads PELRSSGLTPPRAVLNPVSP. A Phosphothreonine; by PDRP1 modification is found at Thr533. His535 (tele-phosphohistidine intermediate) is an active-site residue. The substrate site is built by Arg641, Arg698, Glu827, Gly848, Thr849, Asn850, and Asp851. A Mg(2+)-binding site is contributed by Glu827. Position 851 (Asp851) interacts with Mg(2+). Cys913 (proton donor) is an active-site residue.

Belongs to the PEP-utilizing enzyme family. In terms of assembly, homotetramer. Mg(2+) is required as a cofactor. In terms of processing, phosphorylation of Thr-533 in the dark inactivates the enzyme. Dephosphorylation upon light stimulation reactivates the enzyme.

Its subcellular location is the plastid. The protein resides in the chloroplast. It catalyses the reaction pyruvate + phosphate + ATP = phosphoenolpyruvate + AMP + diphosphate + H(+). It participates in photosynthesis; C4 acid pathway. Activated by light-induced dephosphorylation. Inhibited by dark-induced phosphorylation. Both reactions are catalyzed by PDRP1. Inactivated by cold due to the dissociation of the homotetramer. Formation of phosphoenolpyruvate, which is the primary acceptor of CO(2) in C4 and some Crassulacean acid metabolism plants. The protein is Pyruvate, phosphate dikinase, chloroplastic of Flaveria bidentis (Coastal plain yellowtops).